The following is a 326-amino-acid chain: Glutamine synthetase (326 aa).

One can recognise a GS beta-grasp domain in the interval 4–85; the sequence is FKLEYIWLDG…VMCEVMMPDG (82 aa). The 244-residue stretch at 83-326 folds into the GS catalytic domain; the sequence is PDGHAHASNA…GDPYQIVRRF (244 aa). Mg(2+) is bound by residues Glu107 and Glu109. Residue Glu164 coordinates ATP. Residues Glu169 and Glu176 each contribute to the Mg(2+) site. Residue Glu275 coordinates L-glutamate.

Belongs to the glutamine synthetase family. Homooctamer and homotetramer. Mg(2+) serves as cofactor.

It localises to the cytoplasm. The catalysed reaction is L-glutamate + NH4(+) + ATP = L-glutamine + ADP + phosphate + H(+). Transferase activity is inhibited by NH(4)Cl. Its function is as follows. Catalyzes the ATP-dependent biosynthesis of glutamine from glutamate and ammonia. In Rhizobium leguminosarum bv. phaseoli, this protein is Glutamine synthetase.